The chain runs to 259 residues: Pimeloyl-[acyl-carrier protein] methyl ester esterase (259 aa).

The 228-residue stretch at 15-242 (HLVLLHGWGL…AAHAPFISHP (228 aa)) folds into the AB hydrolase-1 domain. Residues Trp22, 82–83 (SL), and 143–147 (FLALQ) each bind substrate. Ser82 functions as the Nucleophile in the catalytic mechanism. Catalysis depends on residues Asp207 and His235. Residue His235 coordinates substrate.

Belongs to the AB hydrolase superfamily. Carboxylesterase BioH family. Monomer.

The protein resides in the cytoplasm. It catalyses the reaction 6-carboxyhexanoyl-[ACP] methyl ester + H2O = 6-carboxyhexanoyl-[ACP] + methanol + H(+). The protein operates within cofactor biosynthesis; biotin biosynthesis. The physiological role of BioH is to remove the methyl group introduced by BioC when the pimeloyl moiety is complete. It allows to synthesize pimeloyl-ACP via the fatty acid synthetic pathway through the hydrolysis of the ester bonds of pimeloyl-ACP esters. The sequence is that of Pimeloyl-[acyl-carrier protein] methyl ester esterase from Cronobacter sakazakii (strain ATCC BAA-894) (Enterobacter sakazakii).